The primary structure comprises 358 residues: MAVVETGAAATAADAGGVVIQPPPSSPPSSMTSQDSGVSSDDQNHHSRIDQVLRHDQGLYSKIGSHVARSDGVDGGESFKRDMRELQELFSKLNPMAEEFVPPSLNKQGGNGVNGGFFTSAGSFFRNNGFAGTGNGGYGNENGGFRRKKSFGQGKRRMNARTSMAQREDVIRRTVYVSDLDQQVTEEQLAGLFVSCGQVVDCRICGDPNSVLRFAFIEFTDEEGAMTALNLSGTMLGFYPVKVLPSKTAIAPVNPTFLPRTEDEREMCARTIYCTNIDKKVTQSDVKIFFESFCGEVYRLRLLGDYQHSTRIAFVEFVMAESAIAALNCSGVVLGSLPIRVSPSKTPVRPRSPRHPMH.

Over residues methionine 1 to valine 19 the composition is skewed to low complexity. Residues methionine 1–histidine 45 are disordered. Positions methionine 31–aspartate 41 are enriched in polar residues. The PAM2-like motif lies at lysine 92–proline 102. Residues glycine 136 to methionine 164 form a disordered region. The segment covering phenylalanine 145–asparagine 159 has biased composition (basic residues). The short motif at arginine 146–arginine 157 is the Bipartite nuclear localization signal element. RRM domains follow at residues arginine 173–threonine 248 and arginine 270–threonine 346.

In terms of tissue distribution, expressed in cauline leaves, stems, immature siliques and primary inflorescences.

It localises to the nucleus. In Arabidopsis thaliana (Mouse-ear cress), this protein is Polyadenylate-binding protein-interacting protein 11 (CID11).